A 322-amino-acid polypeptide reads, in one-letter code: Ribosomal RNA small subunit methyltransferase H (322 aa).

Residues 42 to 44 (GGH), D62, F86, D107, and Q114 each bind S-adenosyl-L-methionine.

Belongs to the methyltransferase superfamily. RsmH family.

The protein resides in the cytoplasm. The catalysed reaction is cytidine(1402) in 16S rRNA + S-adenosyl-L-methionine = N(4)-methylcytidine(1402) in 16S rRNA + S-adenosyl-L-homocysteine + H(+). Its function is as follows. Specifically methylates the N4 position of cytidine in position 1402 (C1402) of 16S rRNA. The chain is Ribosomal RNA small subunit methyltransferase H from Janthinobacterium sp. (strain Marseille) (Minibacterium massiliensis).